The sequence spans 366 residues: MSGNTFGTLFTVTTFGESHGPAIGCVIDGCPPGMVLSEADIQFDLDRRKPGTSRHVTQRQESDTVEILSGVFEGKTTGTPIALLIRNEDQRSKDYGNITETFRPGHADYTYWHKYGIRDPRGGGRSSARLTAPVVGAAAIAKKWLLEQYGTTFKGCMSQLGEIAIPFESWEHVPNNPFFSANASILPQLEAYMDDLRKNGDSCGARIDVVAENVPIGLGEPIYDKLDAEIAYALMGINAVKGVEIGAGFKSVAQKGTEHGDELTPDGFASNNAGGVLGGISTGQNITASMAIKPTSSIRTARHSIDKDGHPIMVETFGRHDPCVGIRATPIAEAMLALVLMDHALRHRAQCGDVKVSPPPIPASSR.

Positions 48 and 54 each coordinate NADP(+). Residues Arg125–Ser127, Asn238–Ala239, Gly278, Lys293–Ser297, and Arg319 each bind FMN.

The protein belongs to the chorismate synthase family. Homotetramer. FMNH2 is required as a cofactor.

The enzyme catalyses 5-O-(1-carboxyvinyl)-3-phosphoshikimate = chorismate + phosphate. It participates in metabolic intermediate biosynthesis; chorismate biosynthesis; chorismate from D-erythrose 4-phosphate and phosphoenolpyruvate: step 7/7. Functionally, catalyzes the anti-1,4-elimination of the C-3 phosphate and the C-6 proR hydrogen from 5-enolpyruvylshikimate-3-phosphate (EPSP) to yield chorismate, which is the branch point compound that serves as the starting substrate for the three terminal pathways of aromatic amino acid biosynthesis. This reaction introduces a second double bond into the aromatic ring system. The polypeptide is Chorismate synthase (Herminiimonas arsenicoxydans).